The sequence spans 204 residues: Tat proofreading chaperone DmsD (204 aa).

It belongs to the TorD/DmsD family. DmsD subfamily.

Required for biogenesis/assembly of DMSO reductase, but not for the interaction of the DmsA signal peptide with the Tat system. May be part of a chaperone cascade complex that facilitates a folding-maturation pathway for the substrate protein. This is Tat proofreading chaperone DmsD from Escherichia coli O6:H1 (strain CFT073 / ATCC 700928 / UPEC).